The chain runs to 399 residues: ATP phosphoribosyltransferase regulatory subunit (399 aa).

Belongs to the class-II aminoacyl-tRNA synthetase family. HisZ subfamily. Heteromultimer composed of HisG and HisZ subunits.

Its subcellular location is the cytoplasm. It functions in the pathway amino-acid biosynthesis; L-histidine biosynthesis; L-histidine from 5-phospho-alpha-D-ribose 1-diphosphate: step 1/9. Required for the first step of histidine biosynthesis. May allow the feedback regulation of ATP phosphoribosyltransferase activity by histidine. This chain is ATP phosphoribosyltransferase regulatory subunit, found in Symbiobacterium thermophilum (strain DSM 24528 / JCM 14929 / IAM 14863 / T).